The chain runs to 82 residues: RNA-binding protein Hfq (82 aa).

The 60-residue stretch at 10–69 (DPFLNALRREHVPVSIYLVNGIKLQGQIESFDQYVVLLRNTVTQMVYKHAISTIVPGRAV) folds into the Sm domain.

The protein belongs to the Hfq family. Homohexamer.

Its function is as follows. RNA chaperone that binds small regulatory RNA (sRNAs) and mRNAs to facilitate mRNA translational regulation in response to envelope stress, environmental stress and changes in metabolite concentrations. Also binds with high specificity to tRNAs. This is RNA-binding protein Hfq from Albidiferax ferrireducens (strain ATCC BAA-621 / DSM 15236 / T118) (Rhodoferax ferrireducens).